A 287-amino-acid polypeptide reads, in one-letter code: ATP synthase gamma chain (287 aa).

Belongs to the ATPase gamma chain family. As to quaternary structure, F-type ATPases have 2 components, CF(1) - the catalytic core - and CF(0) - the membrane proton channel. CF(1) has five subunits: alpha(3), beta(3), gamma(1), delta(1), epsilon(1). CF(0) has three main subunits: a, b and c.

It is found in the cell inner membrane. In terms of biological role, produces ATP from ADP in the presence of a proton gradient across the membrane. The gamma chain is believed to be important in regulating ATPase activity and the flow of protons through the CF(0) complex. This chain is ATP synthase gamma chain, found in Stenotrophomonas maltophilia (strain K279a).